We begin with the raw amino-acid sequence, 267 residues long: 2-keto-3-deoxy-L-rhamnonate aldolase (267 aa).

Residue His49 is the Proton acceptor of the active site. Gln151 contacts substrate. Glu153 serves as a coordination point for Mg(2+). Ala178 and Asp179 together coordinate substrate. Mg(2+) is bound at residue Asp179.

It belongs to the HpcH/HpaI aldolase family. KDR aldolase subfamily. As to quaternary structure, homohexamer. Mg(2+) is required as a cofactor.

It carries out the reaction 2-dehydro-3-deoxy-L-rhamnonate = (S)-lactaldehyde + pyruvate. Functionally, catalyzes the reversible retro-aldol cleavage of 2-keto-3-deoxy-L-rhamnonate (KDR) to pyruvate and lactaldehyde. The protein is 2-keto-3-deoxy-L-rhamnonate aldolase of Salmonella enteritidis PT4 (strain P125109).